Consider the following 341-residue polypeptide: Cyclic GMP-AMP synthase (341 aa).

Residue Ser-56 coordinates ATP. Active-site residues include Asp-71 and Asp-73. Residue Asp-73 coordinates Mg(2+). Residue Asn-109 participates in ATP binding. The active site involves Asp-123. Mg(2+) is bound at residue Asp-123. ATP is bound by residues Leu-192 and Asp-238.

The protein belongs to the CD-NTase family. B04 subfamily. As to quaternary structure, monomer. Mg(2+) is required as a cofactor.

It catalyses the reaction GTP + ATP = 3',3'-cGAMP + 2 diphosphate. Its function is as follows. Cyclic nucleotide synthase (second messenger synthase) of a CBASS antivirus system. CBASS (cyclic oligonucleotide-based antiphage signaling system) provides immunity against bacteriophage. The CD-NTase protein synthesizes cyclic nucleotides in response to infection; these serve as specific second messenger signals. The signals activate a diverse range of effectors, leading to bacterial cell death and thus abortive phage infection. A type II-A(GA) CBASS system. In terms of biological role, catalyzes the synthesis of 3'3'-cyclic GMP-AMP (3'3'-cGAMP) from GTP and ATP, a second messenger in cell signal transduction. May make another product. Controls the activity of the CBASS cGAMP-activated phospholipase effector protein. This chain is Cyclic GMP-AMP synthase, found in Bacteroides fragilis.